The chain runs to 354 residues: Phospho-N-acetylmuramoyl-pentapeptide-transferase (354 aa).

Helical transmembrane passes span alanine 27–leucine 47, threonine 73–valine 93, leucine 97–tyrosine 117, phenylalanine 138–valine 158, leucine 162–glycine 182, glycine 193–alanine 213, alanine 230–phenylalanine 250, alanine 256–valine 276, isoleucine 282–valine 302, and threonine 331–leucine 351.

This sequence belongs to the glycosyltransferase 4 family. MraY subfamily. It depends on Mg(2+) as a cofactor.

Its subcellular location is the cell inner membrane. It carries out the reaction UDP-N-acetyl-alpha-D-muramoyl-L-alanyl-gamma-D-glutamyl-meso-2,6-diaminopimeloyl-D-alanyl-D-alanine + di-trans,octa-cis-undecaprenyl phosphate = di-trans,octa-cis-undecaprenyl diphospho-N-acetyl-alpha-D-muramoyl-L-alanyl-D-glutamyl-meso-2,6-diaminopimeloyl-D-alanyl-D-alanine + UMP. Its pathway is cell wall biogenesis; peptidoglycan biosynthesis. Functionally, catalyzes the initial step of the lipid cycle reactions in the biosynthesis of the cell wall peptidoglycan: transfers peptidoglycan precursor phospho-MurNAc-pentapeptide from UDP-MurNAc-pentapeptide onto the lipid carrier undecaprenyl phosphate, yielding undecaprenyl-pyrophosphoryl-MurNAc-pentapeptide, known as lipid I. This chain is Phospho-N-acetylmuramoyl-pentapeptide-transferase, found in Novosphingobium aromaticivorans (strain ATCC 700278 / DSM 12444 / CCUG 56034 / CIP 105152 / NBRC 16084 / F199).